The primary structure comprises 498 residues: Galactose-1-phosphate uridylyltransferase (498 aa).

This sequence belongs to the galactose-1-phosphate uridylyltransferase type 2 family.

It localises to the cytoplasm. The enzyme catalyses alpha-D-galactose 1-phosphate + UDP-alpha-D-glucose = alpha-D-glucose 1-phosphate + UDP-alpha-D-galactose. It functions in the pathway carbohydrate metabolism; galactose metabolism. The sequence is that of Galactose-1-phosphate uridylyltransferase from Latilactobacillus sakei subsp. sakei (strain 23K) (Lactobacillus sakei subsp. sakei).